Here is a 131-residue protein sequence, read N- to C-terminus: Small ribosomal subunit protein uS8 (131 aa).

Belongs to the universal ribosomal protein uS8 family. As to quaternary structure, part of the 30S ribosomal subunit. Contacts proteins S5 and S12.

Its function is as follows. One of the primary rRNA binding proteins, it binds directly to 16S rRNA central domain where it helps coordinate assembly of the platform of the 30S subunit. This chain is Small ribosomal subunit protein uS8, found in Wolinella succinogenes (strain ATCC 29543 / DSM 1740 / CCUG 13145 / JCM 31913 / LMG 7466 / NCTC 11488 / FDC 602W) (Vibrio succinogenes).